Consider the following 509-residue polypeptide: MVLWILWRPFGFSGRFLKLESHSITESKSLIPVAWTSLTQMLLEAPGIFLLGQRKRFSTMPETETHERETELFSPPSDVRGMTKLDRTAFKKTVNIPVLKVRKEIVSKLMRSLKRAALQRPGIRRVIEDPEDKESRLIMLDPYKIFTHDSFEKAELSVLEQLNVSPQISKYNLELTYEHFKSEEILRAVLPEGQDVTSGFSRIGHIAHLNLRDHQLPFKHLIGQVMIDKNPGITSAVNKINNIDNMYRNFQMEVLSGEQNMMTKVRENNYTYEFDFSKVYWNPRLSTEHSRITELLKPGDVLFDVFAGVGPFAIPVAKKNCTVFANDLNPESHKWLLYNCKLNKVDQKVKVFNLDGKDFLQGPVKEELMQLLGLSKERKPSVHVVMNLPAKAIEFLSAFKWLLDGQPCSSEFLPIVHCYSFSKDANPAEDVRQRAGAVLGISLEACSSVHLVRNVAPNKEMLCITFQIPASVLYKNQTRNPENHEDPPLKRQRTAEAFSDEKTQIVSNT.

Residues His-289, Asp-327–Leu-328, Asp-355–Gly-356, and Asn-387 contribute to the S-adenosyl-L-methionine site. A disordered region spans residues Thr-478–Thr-509.

Belongs to the class I-like SAM-binding methyltransferase superfamily. TRM5/TYW2 family. As to quaternary structure, monomer.

The protein resides in the mitochondrion matrix. It localises to the nucleus. Its subcellular location is the cytoplasm. It catalyses the reaction guanosine(37) in tRNA + S-adenosyl-L-methionine = N(1)-methylguanosine(37) in tRNA + S-adenosyl-L-homocysteine + H(+). Its function is as follows. Involved in mitochondrial tRNA methylation. Specifically methylates the N1 position of guanosine-37 in various tRNAs. Methylation is not dependent on the nature of the nucleoside 5' of the target nucleoside. This is the first step in the biosynthesis of wybutosine (yW), a modified base adjacent to the anticodon of tRNAs and required for accurate decoding. The chain is tRNA (guanine(37)-N(1))-methyltransferase from Homo sapiens (Human).